We begin with the raw amino-acid sequence, 299 residues long: MTLRIGTRGSKLATTQAGHMRDRLKHFGRDAELTIVTTPGDVNMSPVERIGVGVFTQALRDALVADEIDVAVHSFKDLPTAPDPRFHLVVPTRADARDALIARDGLTLEELPEGAKVGTSAPRRISQLKALRPDLEILPLRGNIDTRMGKVTSGELDAVVLAFAGLSRVGMQDRATQVFDPDMLMPAPAQGALAIECRVEDEDIITGLNMLMHADTYVTAVAERTVLNRLEAGCTAPVAAHATLDGYAGDTMTLTAGVFALDGSEQLVFSAQGAGERPEELAEQVAAQLIEQGAATLLG.

Cys234 carries the S-(dipyrrolylmethanemethyl)cysteine modification.

It belongs to the HMBS family. Monomer. The cofactor is dipyrromethane.

It catalyses the reaction 4 porphobilinogen + H2O = hydroxymethylbilane + 4 NH4(+). It participates in porphyrin-containing compound metabolism; protoporphyrin-IX biosynthesis; coproporphyrinogen-III from 5-aminolevulinate: step 2/4. Tetrapolymerization of the monopyrrole PBG into the hydroxymethylbilane pre-uroporphyrinogen in several discrete steps. This is Porphobilinogen deaminase from Corynebacterium efficiens (strain DSM 44549 / YS-314 / AJ 12310 / JCM 11189 / NBRC 100395).